Reading from the N-terminus, the 917-residue chain is Spermatogenesis-associated protein 31D3 (917 aa).

Residues 29–49 (FICLSGLGLFILYLFYMVLTL) traverse the membrane as a helical segment. Disordered regions lie at residues 55–80 (EKNNDTQKHQGRARRKRKSVTFKDRK), 152–195 (SVSP…PPPL), and 773–797 (SQETAPKNHLLHDPETSSEEDLRSN). A compositionally biased stretch (basic residues) spans 63-74 (HQGRARRKRKSV). A compositionally biased stretch (low complexity) spans 152-163 (SVSPLASSASGA). Over residues 164–177 (ESSFTLASTPSATT) the composition is skewed to polar residues. Residues 782–797 (LLHDPETSSEEDLRSN) show a composition bias toward basic and acidic residues.

Belongs to the SPATA31 family.

It localises to the membrane. May play a role in spermatogenesis. This is Spermatogenesis-associated protein 31D3 (SPATA31D3) from Homo sapiens (Human).